We begin with the raw amino-acid sequence, 293 residues long: MPWIQLRIDTDGPHADALSDQLMEEGSISITFEDGKDTPIYEPTLGETPLWNHTVIIALFEADHDLVPVVERLKLLPYLGENFSHKIEQVEDKDWEREWMDNFHPIKFGDRLWICPSWREIPDPTAVNVILDPGLAFGTGTHPTTALCLEWLDGLDYRNKDVIDFGCGSGILAVAALKLGAEKVTGVDIDYQAIEASKANAERNGVEDQLALYLPEDQPEGLIADILVANILAGPLRELAPLIAEKVKPGGQLALSGLLKEQADEVSAFYSQWFEMDAPAHKDDWSRLTGIRK.

Positions 145, 166, 188, and 230 each coordinate S-adenosyl-L-methionine.

Belongs to the methyltransferase superfamily. PrmA family.

The protein localises to the cytoplasm. It carries out the reaction L-lysyl-[protein] + 3 S-adenosyl-L-methionine = N(6),N(6),N(6)-trimethyl-L-lysyl-[protein] + 3 S-adenosyl-L-homocysteine + 3 H(+). In terms of biological role, methylates ribosomal protein L11. The chain is Ribosomal protein L11 methyltransferase from Shewanella piezotolerans (strain WP3 / JCM 13877).